The chain runs to 295 residues: CBY1-interacting BAR domain-containing protein 1 (295 aa).

The transit peptide at 1–49 (MMSRTPDARARDTQTKQIQENITSVEKHFGDLCQLFAAYVRKTARLRDK) directs the protein to the mitochondrion. Residues 12–222 (DTQTKQIQEN…NVDEEGDLEV (211 aa)) are BAR-like. A coiled-coil region spans residues 111-185 (KREDLKQTQS…KQKIRDIKKV (75 aa)). Polar residues predominate over residues 243–265 (SKLSLNRTGTSMSKSGTMQSRTS). The segment at 243–295 (SKLSLNRTGTSMSKSGTMQSRTSSRQRKRDDEEDEEEDDEDEDDLEEVTDDEH) is disordered. Over residues 273–295 (DEEDEEEDDEDEDDLEEVTDDEH) the composition is skewed to acidic residues.

Belongs to the CIBAR family.

The protein resides in the cytoplasm. Its subcellular location is the cytoskeleton. The protein localises to the microtubule organizing center. It is found in the centrosome. It localises to the centriole. The protein resides in the cell projection. Its subcellular location is the cilium. The protein localises to the nucleus. It is found in the mitochondrion inner membrane. It localises to the flagellum. Plays a critical role in regulating mitochondrial ultrastructure and function by maintaining the integrity of mitochondrial morphology, particularly the organization of cristae. Plays a crucial role in ciliogenesis. Plays a key role in the correct positioning of the annulus, a septin-based ring structure in the sperm flagellum, serving both as a physical barrier and a membrane diffusion barrier that separates the midpiece (MP) from the principal piece (PP). This is CBY1-interacting BAR domain-containing protein 1 (cibar1) from Danio rerio (Zebrafish).